The following is a 434-amino-acid chain: Glutamyl-tRNA reductase (434 aa).

Substrate contacts are provided by residues 52–55 (TCNR), Ser115, 120–122 (ETQ), and Gln126. Cys53 serves as the catalytic Nucleophile. 195 to 200 (GAGEMI) provides a ligand contact to NADP(+).

It belongs to the glutamyl-tRNA reductase family. Homodimer.

The enzyme catalyses (S)-4-amino-5-oxopentanoate + tRNA(Glu) + NADP(+) = L-glutamyl-tRNA(Glu) + NADPH + H(+). It participates in porphyrin-containing compound metabolism; protoporphyrin-IX biosynthesis; 5-aminolevulinate from L-glutamyl-tRNA(Glu): step 1/2. Functionally, catalyzes the NADPH-dependent reduction of glutamyl-tRNA(Glu) to glutamate 1-semialdehyde (GSA). The polypeptide is Glutamyl-tRNA reductase (Cupriavidus necator (strain ATCC 17699 / DSM 428 / KCTC 22496 / NCIMB 10442 / H16 / Stanier 337) (Ralstonia eutropha)).